A 2429-amino-acid chain; its full sequence is Highly reducing polyketide synthase acrA (2429 aa).

Positions 4-436 (PEPIAIVGMG…GTNAHAIIES (433 aa)) constitute a Ketosynthase family 3 (KS3) domain. Residues C177, H314, and H356 each act as for beta-ketoacyl synthase activity in the active site. Residues 541 to 861 (VFTGQGAQWP…PYSGTLSRGQ (321 aa)) form a malonyl-CoA:ACP transacylase (MAT) domain region. The interval 931-1068 (HPLLGVRSTE…GTVRVVLGPA (138 aa)) is N-terminal hotdog fold. The segment at 931–1229 (HPLLGVRSTE…RCSSLTPPGP (299 aa)) is dehydratase (DH) domain. The PKS/mFAS DH domain occupies 931–1230 (HPLLGVRSTE…CSSLTPPGPR (300 aa)). H963 acts as the Proton acceptor; for dehydratase activity in catalysis. Residues 1082–1230 (VFHEVKTERF…CSSLTPPGPR (149 aa)) form a C-terminal hotdog fold region. The Proton donor; for dehydratase activity role is filled by D1141. Residues 1388–1577 (NGYMGRVAGQ…VNDFVDESKY (190 aa)) form a methyltransferase (MT) domain region. The tract at residues 2065 to 2235 (TYLLVGCTGG…ARGLAASVFH (171 aa)) is ketoreductase (KR) domain. Residues 2351–2428 (EVDGVIQEAF…ELCREAASEV (78 aa)) enclose the Carrier domain. The residue at position 2388 (S2388) is an O-(pantetheine 4'-phosphoryl)serine.

It functions in the pathway secondary metabolite biosynthesis. Highly reducing polyketide synthase; part of the cluster that mediates the biosynthesis of acurin A, a highly reduced polyketide coupled to a serine via a peptide bond. The activities of the highly reducing polyketide synthase acrA and the nonribosomal peptide synthetase acrB are collectively responsible for the synthesis of the acurin A core structure with a heptaketide backbone produced by acrA covalently fused to a L-serine by acrB. After the formation of the PK-NRP hybrid product, it is detached from acrB by reductive release to set up the formation of the lactam ring by aldol condensation. The hydrolyase acrC then catalyzes water loss to generate a double bond in the ring. This double bond is probably reduced, which is followed by three oxidations at C-22 to generate the carboxylic acid moiety, involving probably the FAD-binding monooxygenase acrE and the cytochrome P450 monooxygenases acrD and acrF. Finally, a last methylation step performed by the O-methyltransferase acrG leads to the production of acurin A. This is Highly reducing polyketide synthase acrA from Aspergillus aculeatus (strain ATCC 16872 / CBS 172.66 / WB 5094).